We begin with the raw amino-acid sequence, 128 residues long: Ribonuclease P protein component (128 aa).

Belongs to the RnpA family. Consists of a catalytic RNA component (M1 or rnpB) and a protein subunit.

The catalysed reaction is Endonucleolytic cleavage of RNA, removing 5'-extranucleotides from tRNA precursor.. Functionally, RNaseP catalyzes the removal of the 5'-leader sequence from pre-tRNA to produce the mature 5'-terminus. It can also cleave other RNA substrates such as 4.5S RNA. The protein component plays an auxiliary but essential role in vivo by binding to the 5'-leader sequence and broadening the substrate specificity of the ribozyme. The protein is Ribonuclease P protein component of Prochlorococcus marinus (strain AS9601).